The following is an 840-amino-acid chain: Intracellular phospholipase A1 (840 aa).

Disordered stretches follow at residues 1-142 (MSGS…RRRK) and 666-718 (KKNK…AANA). Residues 26 to 39 (GKVKQKEKPKEKQM) are compositionally biased toward basic and acidic residues. Over residues 97 to 111 (SRPSGLPSNGNPGSS) the composition is skewed to low complexity. In terms of domain architecture, DDHD spans 564–827 (LEFKVKYLFA…ALFLANVLYC (264 aa)). Positions 668–680 (NKDDKTADARSGG) are enriched in basic and acidic residues. Acidic residues predominate over residues 681-694 (DDENEDEDECDSDE).

Belongs to the PA-PLA1 family.

It catalyses the reaction 1,2-dihexadecanoyl-sn-glycero-3-phospho-(1D-myo-inositol) + H2O = 2-hexadecanoyl-sn-glycero-3-phospho-(1D-myo-inositol) + hexadecanoate + H(+). It carries out the reaction a 1,2-diacyl-sn-glycero-3-phospho-L-serine + H2O = a 2-acyl-sn-glycero-3-phospho-L-serine + a fatty acid + H(+). The enzyme catalyses 1-hexadecanoyl-2-(9Z-octadecenoyl)-sn-glycero-3-phospho-L-serine + H2O = 2-(9Z-octadecenoyl)-sn-glycero-3-phospho-L-serine + hexadecanoate + H(+). The catalysed reaction is 1,2-di-(9Z-octadecenoyl)-sn-glycero-3-phosphocholine + H2O = (9Z-octadecenoyl)-sn-glycero-3-phosphocholine + (9Z)-octadecenoate + H(+). It catalyses the reaction a 1,2-diacyl-sn-glycero-3-phosphocholine + H2O = a 1-acyl-sn-glycero-3-phosphocholine + a fatty acid + H(+). It carries out the reaction 1,2-dihexadecanoyl-sn-glycero-3-phosphocholine + H2O = 1-hexadecanoyl-sn-glycero-3-phosphocholine + hexadecanoate + H(+). Its activity is regulated as follows. Inhibited by E-6-bromomethylene-3-1-naphthalenyl-2H-tetrahydropyran-2-one (BEL) in vitro. Functionally, hydrolyzes the ester bond at the sn-1 position of glycerophospholipids and produces 2-acyl lysophospholipids, being phosphatidylinositol (PI) its major substrate. PI is a versatile lipid that not only serves as a structural component of cellular membranes, but also plays important roles in signal transduction through distinct phosphorylated derivatives of the inositol head group. Catalyzes the hydrolysis of phosphatidylcholine at sn-2 position in vitro. Regulates asymmetric division, an important property of stem cells in C.elegans, by controlling the subcellular localizations of beta-catenin. The chain is Intracellular phospholipase A1 from Caenorhabditis elegans.